We begin with the raw amino-acid sequence, 311 residues long: Aspartate carbamoyltransferase catalytic subunit (311 aa).

Carbamoyl phosphate contacts are provided by R55 and T56. K85 provides a ligand contact to L-aspartate. Residues R106, H135, and Q138 each contribute to the carbamoyl phosphate site. L-aspartate contacts are provided by R168 and R230. Residues L268 and P269 each coordinate carbamoyl phosphate.

It belongs to the aspartate/ornithine carbamoyltransferase superfamily. ATCase family. Heterododecamer (2C3:3R2) of six catalytic PyrB chains organized as two trimers (C3), and six regulatory PyrI chains organized as three dimers (R2).

The enzyme catalyses carbamoyl phosphate + L-aspartate = N-carbamoyl-L-aspartate + phosphate + H(+). Its pathway is pyrimidine metabolism; UMP biosynthesis via de novo pathway; (S)-dihydroorotate from bicarbonate: step 2/3. Functionally, catalyzes the condensation of carbamoyl phosphate and aspartate to form carbamoyl aspartate and inorganic phosphate, the committed step in the de novo pyrimidine nucleotide biosynthesis pathway. The chain is Aspartate carbamoyltransferase catalytic subunit from Cronobacter sakazakii (strain ATCC BAA-894) (Enterobacter sakazakii).